Here is a 641-residue protein sequence, read N- to C-terminus: Protein TIC 62, chloroplastic (641 aa).

The N-terminal 63 residues, 1–63 (MEGTCFLRGQ…LSLRASGPIR (63 aa)), are a transit peptide targeting the chloroplast. N-acetylalanine is present on Ala64. 84-113 (VFVAGATGKVGSRTVRELLKLGFRVRAGVR) contacts NADP(+). Residues 328–641 (SKRPYVPPPK…SPLPSPVTNH (314 aa)) are disordered. Positions 359 to 372 (APKEDEAPPKEKNV) are enriched in basic and acidic residues. 2 tandem repeats follow at residues 376–397 (PLSPYASYEDLKPPTSPIPNST) and 444–465 (PLSPYARYENLKPPSSPSPTAS). The tract at residues 376-638 (PLSPYASYED…PPTSPLPSPV (263 aa)) is 4 X 22 AA approximate repeats. Low complexity predominate over residues 393–402 (IPNSTTSVSP). The segment covering 435–444 (KQVEEKKERP) has biased composition (basic and acidic residues). The segment covering 485–528 (SSTVAKTVTETAVATSVTETSVATSVPETAVATSVTETAAPATS) has biased composition (low complexity). Residues 532 to 553 (PLSPYAIYADLKPPTSPTPAST) form repeat 3. Over residues 599 to 612 (AIDTSLASGDNTAQ) the composition is skewed to polar residues. Repeat 4 spans residues 617 to 638 (PLSPYTMYADMKPPTSPLPSPV). The segment covering 630-641 (PTSPLPSPVTNH) has biased composition (pro residues).

As to quaternary structure, part of the Tic complex. Interacts with TIC110 and TIC55. Interacts with LFNR1 and LFNR2. Component of high molecular weight thylakoid LFNRs-containing protein complexes containing LIR1, LFNR1, LFNR2, TIC62 and TROL proteins. In terms of tissue distribution, expressed in cotyledons and leaves, but not in roots.

The protein localises to the plastid. It localises to the chloroplast inner membrane. The protein resides in the chloroplast stroma. It is found in the chloroplast thylakoid. Its function is as follows. Involved in protein precursor import into chloroplasts. Part of the redox regulon consisting of TIC32, TIC 55 and TIC62. Acts as a membrane anchor of LFNR1 and LFNR2. Has a NADPH-dependent dehydrogenase activity, but only after preincubation with lipids. In Arabidopsis thaliana (Mouse-ear cress), this protein is Protein TIC 62, chloroplastic.